A 207-amino-acid polypeptide reads, in one-letter code: Probable GTP-binding protein EngB (207 aa).

The EngB-type G domain maps to 23-197 (AGIEVVFAGR…ETVIGRWLFA (175 aa)). Residues 31–38 (GRSNAGKS), 58–62 (GRTQL), 76–79 (DLPG), 143–146 (TKAD), and 176–178 (FSS) each bind GTP. Positions 38 and 60 each coordinate Mg(2+).

Belongs to the TRAFAC class TrmE-Era-EngA-EngB-Septin-like GTPase superfamily. EngB GTPase family. Mg(2+) serves as cofactor.

Necessary for normal cell division and for the maintenance of normal septation. The polypeptide is Probable GTP-binding protein EngB (Methylobacillus flagellatus (strain ATCC 51484 / DSM 6875 / VKM B-1610 / KT)).